A 92-amino-acid polypeptide reads, in one-letter code: Alpha-elapitoxin-As2a (92 aa).

The signal sequence occupies residues Met-1 to Gly-21. 5 disulfide bridges follow: Cys-24-Cys-41, Cys-34-Cys-62, Cys-47-Cys-51, Cys-66-Cys-77, and Cys-78-Cys-83.

The protein belongs to the three-finger toxin family. Long-chain subfamily. Type II alpha-neurotoxin sub-subfamily. As to expression, expressed by the venom gland.

The protein resides in the secreted. Its function is as follows. Binds with high affinity to muscular (alpha-1/CHRNA1) and neuronal (alpha-7/CHRNA7) nicotinic acetylcholine receptor (nAChR) and inhibits acetylcholine from binding to the receptor, thereby impairing neuromuscular and neuronal transmission. The polypeptide is Alpha-elapitoxin-As2a (Austrelaps superbus (Lowland copperhead snake)).